The following is a 325-amino-acid chain: Malate dehydrogenase (325 aa).

An NAD(+)-binding site is contributed by 11-17; sequence GAAGQIA. Substrate contacts are provided by Arg-92 and Arg-98. Residues Asn-105, Gln-112, and 129 to 131 each bind NAD(+); that span reads VGN. Positions 131 and 162 each coordinate substrate. The active-site Proton acceptor is the His-187.

Belongs to the LDH/MDH superfamily. MDH type 2 family.

The enzyme catalyses (S)-malate + NAD(+) = oxaloacetate + NADH + H(+). Catalyzes the reversible oxidation of malate to oxaloacetate. In Methylococcus capsulatus (strain ATCC 33009 / NCIMB 11132 / Bath), this protein is Malate dehydrogenase.